The primary structure comprises 37 residues: Large ribosomal subunit protein bL36 (37 aa).

It belongs to the bacterial ribosomal protein bL36 family.

The sequence is that of Large ribosomal subunit protein bL36 from Halothermothrix orenii (strain H 168 / OCM 544 / DSM 9562).